Reading from the N-terminus, the 247-residue chain is tRNA pseudouridine synthase A (247 aa).

Asp52 acts as the Nucleophile in catalysis. Tyr113 is a binding site for substrate.

This sequence belongs to the tRNA pseudouridine synthase TruA family. As to quaternary structure, homodimer.

The enzyme catalyses uridine(38/39/40) in tRNA = pseudouridine(38/39/40) in tRNA. Functionally, formation of pseudouridine at positions 38, 39 and 40 in the anticodon stem and loop of transfer RNAs. The protein is tRNA pseudouridine synthase A of Bartonella quintana (strain Toulouse) (Rochalimaea quintana).